The following is a 705-amino-acid chain: Elongation factor G (705 aa).

In terms of domain architecture, tr-type G spans 7-287; sequence HLTRNIGIMA…YVCAFLPSPL (281 aa). Residues 16-23, 84-88, and 138-141 contribute to the GTP site; these read AHIDAGKT, DTPGH, and NKMD.

This sequence belongs to the TRAFAC class translation factor GTPase superfamily. Classic translation factor GTPase family. EF-G/EF-2 subfamily.

The protein resides in the cytoplasm. Its function is as follows. Catalyzes the GTP-dependent ribosomal translocation step during translation elongation. During this step, the ribosome changes from the pre-translocational (PRE) to the post-translocational (POST) state as the newly formed A-site-bound peptidyl-tRNA and P-site-bound deacylated tRNA move to the P and E sites, respectively. Catalyzes the coordinated movement of the two tRNA molecules, the mRNA and conformational changes in the ribosome. The sequence is that of Elongation factor G from Bacteroides thetaiotaomicron (strain ATCC 29148 / DSM 2079 / JCM 5827 / CCUG 10774 / NCTC 10582 / VPI-5482 / E50).